The sequence spans 89 residues: Large ribosomal subunit protein bL27 (89 aa).

A disordered region spans residues 1–23 (MAHKKAGGSSRNGRDSAGKRLGI).

It belongs to the bacterial ribosomal protein bL27 family.

This Rhodopseudomonas palustris (strain BisA53) protein is Large ribosomal subunit protein bL27.